Here is a 156-residue protein sequence, read N- to C-terminus: Large ribosomal subunit protein uL15 (156 aa).

Positions 1 to 16 (MVRRFKRGTKYRRGSR) are enriched in basic residues. The segment at 1-37 (MVRRFKRGTKYRRGSRTHGWGRVGQHRKSGGSGGKGM) is disordered.

It belongs to the universal ribosomal protein uL15 family. In terms of assembly, part of the 50S ribosomal subunit.

Its function is as follows. Binds to the 23S rRNA. This chain is Large ribosomal subunit protein uL15, found in Pyrobaculum aerophilum (strain ATCC 51768 / DSM 7523 / JCM 9630 / CIP 104966 / NBRC 100827 / IM2).